Consider the following 178-residue polypeptide: Large ribosomal subunit protein uL6 (178 aa).

Belongs to the universal ribosomal protein uL6 family. Part of the 50S ribosomal subunit.

This protein binds to the 23S rRNA, and is important in its secondary structure. It is located near the subunit interface in the base of the L7/L12 stalk, and near the tRNA binding site of the peptidyltransferase center. This Campylobacter hominis (strain ATCC BAA-381 / DSM 21671 / CCUG 45161 / LMG 19568 / NCTC 13146 / CH001A) protein is Large ribosomal subunit protein uL6.